A 550-amino-acid chain; its full sequence is MSNYAPFIKPYVEYNEHGWGPCEVPELDVPYQPFCKSDRLGKICDWTAMVPEKKFPSKYASTFGNNSQYAYFYEDDDSTFHLVDTTGSKATKPYQRGRYRTNMRNNVRTRGRTGRGTPNIASLGGSTAGGATASTTKYGKGRHTRNTQNVGRRFGRNAPTRIRESSVMVQSNWVSIEEIDFPRLLKLALPNIKEGKDIATCGSLEFYDKLYDRVNLRNEKPLQKMARVVHTVTTTDDPVIRRLSRTMGNVFATDEILSTIMCCTRSNYSWDVVVEKLGTKVFLDKRYNDQFDLLTVNETSVEPPMEEEGSINSAHSLAMEATLINHNFSQQVLRIGDQEQRFMFEEPNPFEEPGVDLASIGYRYRQWDLGNDVVLIARCKHNAVIQGPNGDMQFLSIKALNEWDSKVTNSVEWRQKLDTQRGAVLASELRNNACKLARWTVEAVLAGSDQLKLGYVSRMNPRDHLRHVILGTQQFKPQEFATQINLNMDNSWGVLRCLIDLVMKQPDGKYLIMKDPNKPMIRLYDVPENAFDSDRDEEESSEPLSNSNDN.

Residues 108 to 152 are disordered; it reads RTRGRTGRGTPNIASLGGSTAGGATASTTKYGKGRHTRNTQNVGR. A compositionally biased stretch (low complexity) spans 115-136; sequence RGTPNIASLGGSTAGGATASTT. Residues 290–304 form an RNA gate region; the sequence is QFDLLTVNETSVEPP. Residues 527–550 are disordered; that stretch reads PENAFDSDRDEEESSEPLSNSNDN.

This sequence belongs to the eIF-3 subunit D family. Component of the eukaryotic translation initiation factor 3 (eIF-3) complex. The eIF-3 complex interacts with pix.

The protein localises to the cytoplasm. In terms of biological role, mRNA cap-binding component of the eukaryotic translation initiation factor 3 (eIF-3) complex, which is involved in protein synthesis of a specialized repertoire of mRNAs and, together with other initiation factors, stimulates binding of mRNA and methionyl-tRNAi to the 40S ribosome. The eIF-3 complex specifically targets and initiates translation of a subset of mRNAs involved in cell proliferation. In the eIF-3 complex, eif3d specifically recognizes and binds the 7-methylguanosine cap of a subset of mRNAs. In Drosophila sechellia (Fruit fly), this protein is Eukaryotic translation initiation factor 3 subunit D-2.